A 664-amino-acid chain; its full sequence is RBBP8 N-terminal-like protein (664 aa).

The segment covering 125-140 (LRGLGDRPKPRAKEGT) has biased composition (basic and acidic residues). Disordered stretches follow at residues 125–284 (LRGL…KLSP) and 369–664 (RAGS…WEET). A compositionally biased stretch (pro residues) spans 241–255 (GTPPPLPARSSPPSP). The span at 437 to 454 (ALDKPLDLSEWGRARGQD) shows a compositional bias: basic and acidic residues. The segment covering 481-496 (SGPLTRSPQALSNGTK) has biased composition (polar residues). Positions 516-528 (LPGSQLSLSSPGS) are enriched in low complexity. The span at 537–552 (PLPPPHPQPPPHPQPP) shows a compositional bias: pro residues. Residues 554–570 (LDGHPEPSKAEVLRPES) are compositionally biased toward basic and acidic residues. Residues 584 to 597 (GLSSQAEATTSTTG) show a composition bias toward polar residues. The span at 628–637 (KKPSRGRRKL) shows a compositional bias: basic residues. The segment covering 654-664 (PSPNSSPWEET) has biased composition (polar residues).

This is RBBP8 N-terminal-like protein (RBBP8NL) from Homo sapiens (Human).